The primary structure comprises 324 residues: Mitochondrial thiamine pyrophosphate carrier 1 (324 aa).

3 Solcar repeats span residues 12–110 (GNRI…ISSA), 119–205 (PQPV…LRSP), and 212–307 (PFGT…VLGL). 6 helical membrane passes run 15-35 (IQVV…VAPL), 79-99 (ITGL…YGGI), 125-145 (FISG…LDLL), 182-202 (TAAI…YEAL), 218-238 (AGAG…LDLV), and 282-299 (GLTV…VTMW).

It belongs to the mitochondrial carrier (TC 2.A.29) family.

Its subcellular location is the mitochondrion inner membrane. Mitochondrial transporter that mediates uptake of thiamine pyrophosphate (ThPP) into mitochondria. The polypeptide is Mitochondrial thiamine pyrophosphate carrier 1 (TPC1) (Ajellomyces capsulatus (strain NAm1 / WU24) (Darling's disease fungus)).